Consider the following 235-residue polypeptide: Glucosamine-6-phosphate deaminase (235 aa).

Asp62 acts as the Proton acceptor; for enolization step in catalysis. Asn128 functions as the For ring-opening step in the catalytic mechanism. The Proton acceptor; for ring-opening step role is filled by His130. Residue Glu135 is the For ring-opening step of the active site.

The protein belongs to the glucosamine/galactosamine-6-phosphate isomerase family. NagB subfamily.

The enzyme catalyses alpha-D-glucosamine 6-phosphate + H2O = beta-D-fructose 6-phosphate + NH4(+). The protein operates within amino-sugar metabolism; N-acetylneuraminate degradation; D-fructose 6-phosphate from N-acetylneuraminate: step 5/5. Its function is as follows. Catalyzes the reversible isomerization-deamination of glucosamine 6-phosphate (GlcN6P) to form fructose 6-phosphate (Fru6P) and ammonium ion. The protein is Glucosamine-6-phosphate deaminase of Streptococcus pneumoniae serotype 2 (strain D39 / NCTC 7466).